Reading from the N-terminus, the 644-residue chain is Protein SNOWY COTYLEDON 3 (644 aa).

Disordered stretches follow at residues methionine 1–glutamate 129, glutamate 162–leucine 252, and serine 290–arginine 414. A compositionally biased stretch (low complexity) spans serine 53–serine 77. Residues leucine 91–serine 112 show a composition bias toward polar residues. Positions cysteine 172–lysine 190 are enriched in basic and acidic residues. 2 stretches are compositionally biased toward polar residues: residues serine 290–glycine 302 and threonine 314–asparagine 332. 2 stretches are compositionally biased toward low complexity: residues serine 343–serine 370 and alanine 397–arginine 412. A QWRF motif motif is present at residues glutamine 463 to phenylalanine 466.

Belongs to the QWRF family. In terms of tissue distribution, expressed in young developing tissues, such as seedlings, roots, flowers, buds and young siliques, and to a lesser extent in mature green tissues.

The protein resides in the peroxisome. Functionally, probable microtubule-associated peroxisomal protein required for chloroplast biogenesis and for the formation of the prolamellar body and prothylakoids in etioplasts. Not involved in peroxisomal metabolism, including mobilization of storage compounds during germination, fatty acid beta-oxydation or photorespiration. The chain is Protein SNOWY COTYLEDON 3 (SCO3) from Arabidopsis thaliana (Mouse-ear cress).